The primary structure comprises 78 residues: Small ribosomal subunit protein bS18 (78 aa).

This sequence belongs to the bacterial ribosomal protein bS18 family. Part of the 30S ribosomal subunit. Forms a tight heterodimer with protein bS6.

Binds as a heterodimer with protein bS6 to the central domain of the 16S rRNA, where it helps stabilize the platform of the 30S subunit. This is Small ribosomal subunit protein bS18 from Clostridium novyi (strain NT).